Here is a 355-residue protein sequence, read N- to C-terminus: Peptide chain release factor 1 (355 aa).

Position 233 is an N5-methylglutamine (Gln-233). Residues 280-293 are compositionally biased toward basic and acidic residues; it reads ERRKKEQERADSRR. The interval 280 to 308 is disordered; the sequence is ERRKKEQERADSRRGQVGSGDRSERIRTY.

It belongs to the prokaryotic/mitochondrial release factor family. In terms of processing, methylated by PrmC. Methylation increases the termination efficiency of RF1.

Its subcellular location is the cytoplasm. Functionally, peptide chain release factor 1 directs the termination of translation in response to the peptide chain termination codons UAG and UAA. The chain is Peptide chain release factor 1 from Rickettsia peacockii (strain Rustic).